A 273-amino-acid chain; its full sequence is Protein FAM210A (273 aa).

Residues 97–106 show a composition bias toward low complexity; the sequence is SSSATSSGPP. Residues 97–116 are disordered; the sequence is SSSATSSGPPSEKKEDPDPL. The span at 107 to 116 shows a compositional bias: basic and acidic residues; sequence SEKKEDPDPL. In terms of domain architecture, DUF1279 spans 118–230; it reads DRSISLYQRF…GYMSTPPPVK (113 aa). Residues 137 to 157 traverse the membrane as a helical segment; it reads VLIPVHLITSAVWFGTFYYAA. Residues 230 to 269 adopt a coiled-coil conformation; it reads KEYLQDKMEETKELLTEKMEETKDRLTEKLQETKGKVSLK. Residues 247–273 form a disordered region; the sequence is KMEETKDRLTEKLQETKGKVSLKKKVE.

Belongs to the FAM210 family. In terms of assembly, interacts with ATAD3A.

It localises to the membrane. Its subcellular location is the mitochondrion. The protein resides in the cytoplasm. Its function is as follows. May play a role in the structure and strength of both muscle and bone. This Bos taurus (Bovine) protein is Protein FAM210A (FAM210A).